Here is a 199-residue protein sequence, read N- to C-terminus: Peroxiredoxin-1 (199 aa).

N-acetylserine is present on Ser-2. Residues 6 to 165 form the Thioredoxin domain; sequence AKIGYPAPNF…IIRLVQAFQF (160 aa). Lys-7 bears the N6-acetyllysine; alternate mark. Lys-7 is covalently cross-linked (Glycyl lysine isopeptide (Lys-Gly) (interchain with G-Cter in SUMO2); alternate). Residues Lys-16 and Lys-27 each carry the N6-acetyllysine modification. Ser-32 is subject to Phosphoserine. N6-acetyllysine; alternate is present on Lys-35. Lys-35 is modified (N6-succinyllysine; alternate). The active-site Cysteine sulfenic acid (-SOH) intermediate is the Cys-52. Thr-90 is subject to Phosphothreonine. Lys-120 participates in a covalent cross-link: Glycyl lysine isopeptide (Lys-Gly) (interchain with G-Cter in SUMO2). Lys-136 is subject to N6-acetyllysine. Lys-185 participates in a covalent cross-link: Glycyl lysine isopeptide (Lys-Gly) (interchain with G-Cter in SUMO1). At Lys-197 the chain carries N6-acetyllysine.

Belongs to the peroxiredoxin family. AhpC/Prx1 subfamily. In terms of assembly, homodimer; disulfide-linked, upon oxidation. 5 homodimers assemble to form a ring-like decamer. Interacts with GDPD5; forms a mixed-disulfide with GDPD5. Interacts with SESN1 and SESN2. Interacts with FAM107A. Post-translationally, phosphorylated on Thr-90 during the M-phase, which leads to a decrease in enzymatic activity. Acetylation increases reducing activity and resistance to superoxidation. Deacetylated by HDAC6 which decreases reducing activity. As to expression, found in various tissues; high concentration in liver.

Its subcellular location is the cytoplasm. It carries out the reaction a hydroperoxide + [thioredoxin]-dithiol = an alcohol + [thioredoxin]-disulfide + H2O. Functionally, thiol-specific peroxidase that catalyzes the reduction of hydrogen peroxide and organic hydroperoxides to water and alcohols, respectively. Plays a role in cell protection against oxidative stress by detoxifying peroxides and as sensor of hydrogen peroxide-mediated signaling events. Might participate in the signaling cascades of growth factors and tumor necrosis factor-alpha by regulating the intracellular concentrations of H(2)O(2). Reduces an intramolecular disulfide bond in GDPD5 that gates the ability to GDPD5 to drive postmitotic motor neuron differentiation. This Mus musculus (Mouse) protein is Peroxiredoxin-1 (Prdx1).